Consider the following 214-residue polypeptide: Methylthioribulose-1-phosphate dehydratase (214 aa).

Zn(2+)-binding residues include H103 and H105.

This sequence belongs to the aldolase class II family. MtnB subfamily. Zn(2+) is required as a cofactor.

The enzyme catalyses 5-(methylsulfanyl)-D-ribulose 1-phosphate = 5-methylsulfanyl-2,3-dioxopentyl phosphate + H2O. Its pathway is amino-acid biosynthesis; L-methionine biosynthesis via salvage pathway; L-methionine from S-methyl-5-thio-alpha-D-ribose 1-phosphate: step 2/6. In terms of biological role, catalyzes the dehydration of methylthioribulose-1-phosphate (MTRu-1-P) into 2,3-diketo-5-methylthiopentyl-1-phosphate (DK-MTP-1-P). The chain is Methylthioribulose-1-phosphate dehydratase from Granulibacter bethesdensis (strain ATCC BAA-1260 / CGDNIH1).